The chain runs to 220 residues: N-(5'-phosphoribosyl)anthranilate isomerase (220 aa).

This sequence belongs to the TrpF family.

It carries out the reaction N-(5-phospho-beta-D-ribosyl)anthranilate = 1-(2-carboxyphenylamino)-1-deoxy-D-ribulose 5-phosphate. It functions in the pathway amino-acid biosynthesis; L-tryptophan biosynthesis; L-tryptophan from chorismate: step 3/5. The sequence is that of N-(5'-phosphoribosyl)anthranilate isomerase from Xylella fastidiosa (strain M23).